Reading from the N-terminus, the 50-residue chain is Protein hunchback (50 aa).

C2H2-type zinc fingers lie at residues 1-5 (HIRNH), 11-33 (FKCNKCSYSCVNKSMLNSHLKSH), and 39-50 (YRCADCAYATKY).

The protein belongs to the hunchback C2H2-type zinc-finger protein family.

The protein resides in the nucleus. In terms of biological role, gap class segmentation protein that controls development of head structures. In Schultesia lampyridiformis (Firefly mimic roach), this protein is Protein hunchback (hb).